Reading from the N-terminus, the 925-residue chain is Translation initiation factor IF-2 (925 aa).

The segment at 190 to 329 (PAAPTSEAAP…RRRDEREAAV (140 aa)) is disordered. 3 stretches are compositionally biased toward pro residues: residues 199–209 (PPEPEPTPLPA), 217–238 (PVRP…PAPR), and 279–288 (RPVPAQPAPQ). The segment covering 289–307 (TPTRSGSGIAKKGAITKAG) has biased composition (low complexity). Basic and acidic residues predominate over residues 320–329 (RRRDEREAAV). The region spanning 417–589 (VRPPVVTIMG…LLLVADYELE (173 aa)) is the tr-type G domain. Residues 426 to 433 (GHVDHGKT) form a G1 region. 426 to 433 (GHVDHGKT) is a GTP binding site. A G2 region spans residues 451–455 (GITQH). A G3 region spans residues 476–479 (DTPG). Residues 476-480 (DTPGH) and 530-533 (NKVD) contribute to the GTP site. The interval 530–533 (NKVD) is G4. The segment at 566 to 568 (SAK) is G5.

It belongs to the TRAFAC class translation factor GTPase superfamily. Classic translation factor GTPase family. IF-2 subfamily.

It localises to the cytoplasm. Functionally, one of the essential components for the initiation of protein synthesis. Protects formylmethionyl-tRNA from spontaneous hydrolysis and promotes its binding to the 30S ribosomal subunits. Also involved in the hydrolysis of GTP during the formation of the 70S ribosomal complex. This is Translation initiation factor IF-2 from Gloeobacter violaceus (strain ATCC 29082 / PCC 7421).